A 37-amino-acid polypeptide reads, in one-letter code: Mu-agatoxin-Aa1f (37 aa).

4 disulfides stabilise this stretch: Cys-2/Cys-18, Cys-9/Cys-23, Cys-17/Cys-33, and Cys-25/Cys-31. Residue Asn-37 is modified to Asparagine amide.

It belongs to the neurotoxin 07 (Beta/delta-agtx) family. 03 (aga-4) subfamily. Aga sub-subfamily. As to expression, expressed by the venom gland.

It is found in the secreted. Functionally, insecticidal neurotoxin that induces an irreversible spastic paralysis when injected into insects. Modifies presynaptic voltage-gated sodium channels (Nav), causing them to open at the normal resting potential of the nerve. This leads to spontaneous release of neurotransmitter and repetitive action potentials in motor neurons. This is Mu-agatoxin-Aa1f from Agelenopsis aperta (North American funnel-web spider).